The sequence spans 152 residues: Peptide deformylase (152 aa).

The Fe cation site is built by Cys-91 and His-133. Glu-134 is a catalytic residue. His-137 is a binding site for Fe cation.

This sequence belongs to the polypeptide deformylase family. The cofactor is Fe(2+).

It catalyses the reaction N-terminal N-formyl-L-methionyl-[peptide] + H2O = N-terminal L-methionyl-[peptide] + formate. Functionally, removes the formyl group from the N-terminal Met of newly synthesized proteins. Requires at least a dipeptide for an efficient rate of reaction. N-terminal L-methionine is a prerequisite for activity but the enzyme has broad specificity at other positions. The chain is Peptide deformylase from Wigglesworthia glossinidia brevipalpis.